Reading from the N-terminus, the 168-residue chain is ATP synthase subunit b (168 aa).

Residues 9–29 (AIPFGTIAYTLVVFLILLVML) form a helical membrane-spanning segment.

Belongs to the ATPase B chain family. F-type ATPases have 2 components, F(1) - the catalytic core - and F(0) - the membrane proton channel. F(1) has five subunits: alpha(3), beta(3), gamma(1), delta(1), epsilon(1). F(0) has three main subunits: a(1), b(2) and c(10-14). The alpha and beta chains form an alternating ring which encloses part of the gamma chain. F(1) is attached to F(0) by a central stalk formed by the gamma and epsilon chains, while a peripheral stalk is formed by the delta and b chains.

Its subcellular location is the cell membrane. In terms of biological role, f(1)F(0) ATP synthase produces ATP from ADP in the presence of a proton or sodium gradient. F-type ATPases consist of two structural domains, F(1) containing the extramembraneous catalytic core and F(0) containing the membrane proton channel, linked together by a central stalk and a peripheral stalk. During catalysis, ATP synthesis in the catalytic domain of F(1) is coupled via a rotary mechanism of the central stalk subunits to proton translocation. Its function is as follows. Component of the F(0) channel, it forms part of the peripheral stalk, linking F(1) to F(0). The sequence is that of ATP synthase subunit b from Bacillus cytotoxicus (strain DSM 22905 / CIP 110041 / 391-98 / NVH 391-98).